We begin with the raw amino-acid sequence, 291 residues long: Sulfotransferase 1A1 (291 aa).

44–49 (KSGTNW) contributes to the 3'-phosphoadenylyl sulfate binding site. Residue 102–104 (KTH) participates in substrate binding. Histidine 104 serves as the catalytic Proton acceptor. 3'-phosphoadenylyl sulfate-binding positions include arginine 126, serine 134, tyrosine 189, 223 to 228 (TSFKKM), and 251 to 255 (FMRKG). Serine 134 is subject to Phosphoserine.

The protein belongs to the sulfotransferase 1 family. As to quaternary structure, homodimer. As to expression, expressed in brain, colon, liver, and small intestine of mice colonized with B.ovatus and L.plantarum.

The protein localises to the cytoplasm. The catalysed reaction is a phenol + 3'-phosphoadenylyl sulfate = an aryl sulfate + adenosine 3',5'-bisphosphate + H(+). It carries out the reaction 17beta-estradiol + 3'-phosphoadenylyl sulfate = 17beta-estradiol 3-sulfate + adenosine 3',5'-bisphosphate + H(+). It catalyses the reaction 4-ethylphenol + 3'-phosphoadenylyl sulfate = 4-ethylphenyl sulfate + adenosine 3',5'-bisphosphate + H(+). The enzyme catalyses 4-nitrophenol + 3'-phosphoadenylyl sulfate = 4-nitrophenyl sulfate + adenosine 3',5'-bisphosphate. The catalysed reaction is dopamine + 3'-phosphoadenylyl sulfate = dopamine 3-O-sulfate + adenosine 3',5'-bisphosphate + H(+). It carries out the reaction dopamine + 3'-phosphoadenylyl sulfate = dopamine 4-O-sulfate + adenosine 3',5'-bisphosphate + H(+). It catalyses the reaction 3,3',5-triiodo-L-thyronine + 3'-phosphoadenylyl sulfate = 3,3',5-triiodo-L-thyronine sulfate + adenosine 3',5'-bisphosphate + H(+). The enzyme catalyses 3,3',5'-triiodo-L-thyronine + 3'-phosphoadenylyl sulfate = 3,3',5'-triiodo-L-thyronine sulfate + adenosine 3',5'-bisphosphate + H(+). The catalysed reaction is 3,3'-diiodo-L-thyronine + 3'-phosphoadenylyl sulfate = 3,3'-diiodo-L-thyronine sulfate + adenosine 3',5'-bisphosphate + H(+). It carries out the reaction L-thyroxine + 3'-phosphoadenylyl sulfate = L-thyroxine sulfate + adenosine 3',5'-bisphosphate + H(+). In terms of biological role, sulfotransferase that utilizes 3'-phospho-5'-adenylyl sulfate (PAPS) as sulfonate donor to catalyze the sulfate conjugation of a wide variety of acceptor molecules bearing a hydroxyl or an amine group. Sulfonation increases the water solubility of most compounds, and therefore their renal excretion, but it can also result in bioactivation to form active metabolites. Displays broad substrate specificity for small phenolic compounds. Plays an important role in the sulfonation of endogenous molecules such as steroid hormones. Mediates also the metabolic activation of carcinogenic N-hydroxyarylamines leading to highly reactive intermediates capable of forming DNA adducts, potentially resulting in mutagenesis. May play a role in gut microbiota-host metabolic interaction. O-sulfonates 4-ethylphenol (4-EP), a dietary tyrosine-derived metabolite produced by gut bacteria. The product 4-EPS crosses the blood-brain barrier and may negatively regulate oligodendrocyte maturation and myelination, affecting the functional connectivity of different brain regions associated with the limbic system. Catalyzes the sulfate conjugation of dopamine. Catalyzes the sulfation of T4 (L-thyroxine/3,5,3',5'-tetraiodothyronine), T3 (3,5,3'-triiodothyronine), rT3 (3,3',5'-triiodothyronine) and 3,3'-T2 (3,3'-diiodothyronine), with a substrate preference of 3,3'-T2 &gt; rT3 &gt; T3 &gt; T4. The polypeptide is Sulfotransferase 1A1 (Sult1a1) (Mus musculus (Mouse)).